Consider the following 464-residue polypeptide: 3-isopropylmalate dehydratase large subunit (464 aa).

[4Fe-4S] cluster contacts are provided by Cys-337, Cys-397, and Cys-400.

Belongs to the aconitase/IPM isomerase family. LeuC type 1 subfamily. Heterodimer of LeuC and LeuD. Requires [4Fe-4S] cluster as cofactor.

The enzyme catalyses (2R,3S)-3-isopropylmalate = (2S)-2-isopropylmalate. Its pathway is amino-acid biosynthesis; L-leucine biosynthesis; L-leucine from 3-methyl-2-oxobutanoate: step 2/4. In terms of biological role, catalyzes the isomerization between 2-isopropylmalate and 3-isopropylmalate, via the formation of 2-isopropylmaleate. This chain is 3-isopropylmalate dehydratase large subunit, found in Bacillus thuringiensis subsp. konkukian (strain 97-27).